The primary structure comprises 131 residues: Profilin-4 (131 aa).

Cys13 and Cys115 are joined by a disulfide. Positions 81–97 (VVIRGKKGTGGITIKKT) match the Involved in PIP2 interaction motif. Phosphothreonine is present on Thr111.

Belongs to the profilin family. Occurs in many kinds of cells as a complex with monomeric actin in a 1:1 ratio. Post-translationally, phosphorylated by MAP kinases. As to expression, expressed predominantly in endosperm but is also found at low levels in all tissues examined, including mature and germinated pollen.

It localises to the cytoplasm. Its subcellular location is the cytoskeleton. Functionally, binds to actin and affects the structure of the cytoskeleton. At high concentrations, profilin prevents the polymerization of actin, whereas it enhances it at low concentrations. By binding to PIP2, it inhibits the formation of IP3 and DG. Has a high affinity for poly-proline. The protein is Profilin-4 (PRO4) of Zea mays (Maize).